A 197-amino-acid chain; its full sequence is Rac-like GTP-binding protein 6 (197 aa).

13 to 20 (GDGAVGKT) is a GTP binding site. Positions 35–43 (YVPTVFDNF) match the Effector region motif. GTP-binding positions include 60 to 64 (DTAGQ) and 118 to 121 (TKLD). Cys194 bears the Cysteine methyl ester mark. Cys194 is lipidated: S-geranylgeranyl cysteine. The propeptide at 195–197 (SIL) is removed in mature form.

Belongs to the small GTPase superfamily. Rho family.

The protein resides in the cytoplasm. It localises to the membrane. In terms of biological role, inactive GDP-bound Rho GTPases reside in the cytosol, are found in a complex with Rho GDP-dissociation inhibitors (Rho GDIs), and are released from the GDI protein in order to translocate to membranes upon activation. The chain is Rac-like GTP-binding protein 6 (RAC6) from Oryza sativa subsp. japonica (Rice).